Reading from the N-terminus, the 355-residue chain is uncharacterized protein (355 aa).

An N-terminal signal peptide occupies residues 1–27 (MESPIRTARRTLPLLIGATCLVLALTG). Cysteine 28 is lipidated: N-palmitoyl cysteine. Cysteine 28 carries S-diacylglycerol cysteine lipidation. The segment at 33-53 (GPAQARPTPSASTSPKQAPAL) is disordered. Positions 39 to 48 (PTPSASTSPK) are enriched in polar residues.

The protein localises to the cell membrane. This is an uncharacterized protein from Streptomyces coelicolor (strain ATCC BAA-471 / A3(2) / M145).